A 183-amino-acid polypeptide reads, in one-letter code: Inosine/xanthosine triphosphatase (183 aa).

Position 75 (Asp75) interacts with Mg(2+). A substrate-binding site is contributed by 75–76 (DG).

The protein belongs to the YjjX NTPase family. In terms of assembly, homodimer. It depends on Mg(2+) as a cofactor. Requires Mn(2+) as cofactor.

The enzyme catalyses XTP + H2O = XDP + phosphate + H(+). It carries out the reaction ITP + H2O = IDP + phosphate + H(+). In terms of biological role, phosphatase that hydrolyzes non-canonical purine nucleotides such as XTP and ITP to their respective diphosphate derivatives. Probably excludes non-canonical purines from DNA/RNA precursor pool, thus preventing their incorporation into DNA/RNA and avoiding chromosomal lesions. This Vibrio vulnificus (strain YJ016) protein is Inosine/xanthosine triphosphatase.